Consider the following 415-residue polypeptide: Gamma-glutamyl phosphate reductase (415 aa).

This sequence belongs to the gamma-glutamyl phosphate reductase family.

It is found in the cytoplasm. It carries out the reaction L-glutamate 5-semialdehyde + phosphate + NADP(+) = L-glutamyl 5-phosphate + NADPH + H(+). The protein operates within amino-acid biosynthesis; L-proline biosynthesis; L-glutamate 5-semialdehyde from L-glutamate: step 2/2. Catalyzes the NADPH-dependent reduction of L-glutamate 5-phosphate into L-glutamate 5-semialdehyde and phosphate. The product spontaneously undergoes cyclization to form 1-pyrroline-5-carboxylate. This chain is Gamma-glutamyl phosphate reductase, found in Xylella fastidiosa (strain 9a5c).